The sequence spans 209 residues: HTLV-1 basic zipper factor (209 aa).

Residues 41 to 165 form a disordered region; the sequence is EEEETVLDGL…KEKMQELGVD (125 aa). Composition is skewed to basic and acidic residues over residues 72–87 and 94–160; these read PRGETHRDRQRRAEEK and REKE…EKMQ. Short sequence motifs (nuclear localization signal) lie at residues 87–92, 116–120, and 137–141; these read KRKRKK, RRKRA, and RRERK.

This sequence belongs to the HTLV-1 HBZ protein family. As to quaternary structure, interacts with host ATF4; this interaction inhibits viral RNA transcriptional activation by preventing ATF4 binding to Tax-responsive elements. Interacts with host CREB1; this interaction inhibits host CREB1 transcriptional activity. Interacts with host JUN, JUNB and JUND. Interacts with host EP300 and CREBBP; these interactions inhibit the association of the coactivators with the viral promoter. Interacts with host UBR5; this interaction regulates HBZ protein stability. Interacts with XRCC5 and XRCC6. Interacts with IRF7 and IKBKE; this interaction modulates host interferon signaling. Post-translationally, ubiquitinated by host E3 ligase UBR5 leading to HBZ degradation.

Its subcellular location is the host nucleus. In terms of biological role, enhances viral infectivity and persistence, and facilitates proliferation of HTLV-1-infected lymphocytes. Mechanistically, inhibits Tax-mediated viral replication and NF-kappa-B activation. Plays a role in allowing infected T-cells to escape the cytotoxic T-lymphocyte response by maintaining low levels of viral protein production. Also inhibits host EP300 histone acetyltransferase (HAT) activity, reducing levels of acetylated histone H3 at 'Lys-18' (H3K18ac) in infected cells. Contributes to the accumulation of chromosomal abnormalities by inhibiting double-stranded DNA breaks (DSB) repair through the NHEJ pathway. Participates in the modulation of host immune response at multiple levels contributing to abnormal interferon signaling and viral pathogenesis. The protein is HTLV-1 basic zipper factor (HBZ) of Human T-cell leukemia virus 1 (isolate Caribbea HS-35 subtype A) (HTLV-1).